The following is a 778-amino-acid chain: uncharacterized protein (778 aa).

The PE domain maps to 1–92 (MSFVIAVPEA…GARSYVVAEA (92 aa)). Disordered regions lie at residues 125-163 (ADGT…AGLI), 372-510 (TGLA…GDAF), and 718-778 (QGGL…GADG). Composition is skewed to gly residues over residues 402–429 (NQTG…GGLG), 436–510 (DGTG…GDAF), and 718–763 (QGGL…GSSG).

It belongs to the mycobacterial PE family. PGRS subfamily.

This is an uncharacterized protein from Mycobacterium tuberculosis (strain CDC 1551 / Oshkosh).